Consider the following 288-residue polypeptide: N-acetylneuraminate lyase (288 aa).

The aceneuramate site is built by serine 44 and threonine 45. Catalysis depends on tyrosine 133, which acts as the Proton donor. Lysine 161 (schiff-base intermediate with substrate) is an active-site residue. 5 residues coordinate aceneuramate: threonine 163, glycine 185, aspartate 187, glutamate 188, and serine 204.

This sequence belongs to the DapA family. NanA subfamily. In terms of assembly, homotetramer.

It localises to the cytoplasm. It catalyses the reaction aceneuramate = aldehydo-N-acetyl-D-mannosamine + pyruvate. The protein operates within amino-sugar metabolism; N-acetylneuraminate degradation; D-fructose 6-phosphate from N-acetylneuraminate: step 1/5. Catalyzes the reversible aldol cleavage of N-acetylneuraminic acid (sialic acid; Neu5Ac) to form pyruvate and N-acetylmannosamine (ManNAc) via a Schiff base intermediate. The protein is N-acetylneuraminate lyase of Clostridium perfringens (strain SM101 / Type A).